Here is a 368-residue protein sequence, read N- to C-terminus: Chorismate synthase (368 aa).

Residue Arg46 participates in NADP(+) binding. FMN-binding positions include 123-125 (RSS), 240-241 (NA), Gly285, 300-304 (KPTPT), and Arg326.

It belongs to the chorismate synthase family. Homotetramer. Requires FMNH2 as cofactor.

It carries out the reaction 5-O-(1-carboxyvinyl)-3-phosphoshikimate = chorismate + phosphate. It functions in the pathway metabolic intermediate biosynthesis; chorismate biosynthesis; chorismate from D-erythrose 4-phosphate and phosphoenolpyruvate: step 7/7. In terms of biological role, catalyzes the anti-1,4-elimination of the C-3 phosphate and the C-6 proR hydrogen from 5-enolpyruvylshikimate-3-phosphate (EPSP) to yield chorismate, which is the branch point compound that serves as the starting substrate for the three terminal pathways of aromatic amino acid biosynthesis. This reaction introduces a second double bond into the aromatic ring system. The chain is Chorismate synthase from Porphyromonas gingivalis (strain ATCC BAA-308 / W83).